The sequence spans 126 residues: Acidic phospholipase A2 S1E6-a (126 aa).

Residues Val-1–Gly-3 form the signal peptide. 7 disulfides stabilise this stretch: Cys-29-Cys-119, Cys-31-Cys-47, Cys-46-Cys-98, Cys-52-Cys-126, Cys-53-Cys-91, Cys-60-Cys-84, and Cys-78-Cys-89. Residues Tyr-30, Gly-32, and Gly-34 each contribute to the Ca(2+) site. His-50 is a catalytic residue. Asp-51 contacts Ca(2+). Asp-92 is a catalytic residue.

In terms of assembly, homodimer. Ca(2+) is required as a cofactor. As to expression, expressed by the venom gland.

It localises to the secreted. It carries out the reaction a 1,2-diacyl-sn-glycero-3-phosphocholine + H2O = a 1-acyl-sn-glycero-3-phosphocholine + a fatty acid + H(+). Functionally, snake venom phospholipase A2 (PLA2) that inhibits ADP-induced platelet aggregation. PLA2 catalyzes the calcium-dependent hydrolysis of the 2-acyl groups in 3-sn-phosphoglycerides. This chain is Acidic phospholipase A2 S1E6-a, found in Calloselasma rhodostoma (Malayan pit viper).